A 397-amino-acid chain; its full sequence is Chorismate synthase (397 aa).

NADP(+) contacts are provided by R40 and R46. FMN is bound by residues 129 to 131 (RSS), 257 to 258 (QA), G302, 317 to 321 (KPISS), and R343.

The protein belongs to the chorismate synthase family. In terms of assembly, homotetramer. FMNH2 is required as a cofactor.

It carries out the reaction 5-O-(1-carboxyvinyl)-3-phosphoshikimate = chorismate + phosphate. It functions in the pathway metabolic intermediate biosynthesis; chorismate biosynthesis; chorismate from D-erythrose 4-phosphate and phosphoenolpyruvate: step 7/7. Its function is as follows. Catalyzes the anti-1,4-elimination of the C-3 phosphate and the C-6 proR hydrogen from 5-enolpyruvylshikimate-3-phosphate (EPSP) to yield chorismate, which is the branch point compound that serves as the starting substrate for the three terminal pathways of aromatic amino acid biosynthesis. This reaction introduces a second double bond into the aromatic ring system. This chain is Chorismate synthase, found in Chlorobium luteolum (strain DSM 273 / BCRC 81028 / 2530) (Pelodictyon luteolum).